The primary structure comprises 373 residues: Meiosis-specific kinetochore protein (373 aa).

Disordered stretches follow at residues 1-91 (MWPL…QDEK) and 250-276 (STPEKTKKKKTNSSTPGKKNRGLLTST). Over residues 77–91 (SLQENRSSEDTQDEK) the composition is skewed to basic and acidic residues. Residues 275 to 277 (STP) carry the POLO box domain (PBD)-binding motif. Residues 332-335 (EICC) form a required for localization to kinetochores region.

Interacts with CENPC. Interacts with PLK1; required for recruitment of PLK1 at kinetochores.

It localises to the chromosome. Its subcellular location is the centromere. The protein resides in the kinetochore. Key regulator of kinetochore function during meiosis I: required both for mono-orientation of kinetochores on sister chromosomes and protection of centromeric cohesin from separase-mediated cleavage. Acts by facilitating kinetochore mono-orientation during meiosis I, when kinetochores on sister chromosomes face the same direction and are thus captured and pulled by spindle fibers from the same pole. Also required to prevent cleavage of cohesin at centromeres during meiosis I, possibly by acting as a regulator of the shugoshin-dependent protection pathway. Acts in collaboration with PLK1: required for PLK1 enrichment to kinetochores. Not required during meiosis II or mitosis. The sequence is that of Meiosis-specific kinetochore protein from Homo sapiens (Human).